We begin with the raw amino-acid sequence, 231 residues long: 5'-methylthioadenosine/S-adenosylhomocysteine nucleosidase (231 aa).

Residue glutamate 12 is the Proton acceptor of the active site. Residues glycine 78, isoleucine 153, and 174–175 (ME) each bind substrate. The Proton donor role is filled by aspartate 198.

It belongs to the PNP/UDP phosphorylase family. MtnN subfamily.

The catalysed reaction is S-adenosyl-L-homocysteine + H2O = S-(5-deoxy-D-ribos-5-yl)-L-homocysteine + adenine. It catalyses the reaction S-methyl-5'-thioadenosine + H2O = 5-(methylsulfanyl)-D-ribose + adenine. The enzyme catalyses 5'-deoxyadenosine + H2O = 5-deoxy-D-ribose + adenine. The protein operates within amino-acid biosynthesis; L-methionine biosynthesis via salvage pathway; S-methyl-5-thio-alpha-D-ribose 1-phosphate from S-methyl-5'-thioadenosine (hydrolase route): step 1/2. Catalyzes the irreversible cleavage of the glycosidic bond in both 5'-methylthioadenosine (MTA) and S-adenosylhomocysteine (SAH/AdoHcy) to adenine and the corresponding thioribose, 5'-methylthioribose and S-ribosylhomocysteine, respectively. Also cleaves 5'-deoxyadenosine, a toxic by-product of radical S-adenosylmethionine (SAM) enzymes, into 5-deoxyribose and adenine. This chain is 5'-methylthioadenosine/S-adenosylhomocysteine nucleosidase, found in Shewanella sp. (strain W3-18-1).